A 209-amino-acid chain; its full sequence is Imidazole glycerol phosphate synthase subunit HisH (209 aa).

The Glutamine amidotransferase type-1 domain maps to 1-205 (MIAIIDYGMG…KGVVETWKSS (205 aa)). The active-site Nucleophile is C79. Residues H180 and E182 contribute to the active site.

As to quaternary structure, heterodimer of HisH and HisF.

Its subcellular location is the cytoplasm. The enzyme catalyses 5-[(5-phospho-1-deoxy-D-ribulos-1-ylimino)methylamino]-1-(5-phospho-beta-D-ribosyl)imidazole-4-carboxamide + L-glutamine = D-erythro-1-(imidazol-4-yl)glycerol 3-phosphate + 5-amino-1-(5-phospho-beta-D-ribosyl)imidazole-4-carboxamide + L-glutamate + H(+). It carries out the reaction L-glutamine + H2O = L-glutamate + NH4(+). It functions in the pathway amino-acid biosynthesis; L-histidine biosynthesis; L-histidine from 5-phospho-alpha-D-ribose 1-diphosphate: step 5/9. In terms of biological role, IGPS catalyzes the conversion of PRFAR and glutamine to IGP, AICAR and glutamate. The HisH subunit catalyzes the hydrolysis of glutamine to glutamate and ammonia as part of the synthesis of IGP and AICAR. The resulting ammonia molecule is channeled to the active site of HisF. The polypeptide is Imidazole glycerol phosphate synthase subunit HisH (Bacillus thuringiensis subsp. konkukian (strain 97-27)).